Consider the following 514-residue polypeptide: Histidine ammonia-lyase (514 aa).

The 5-imidazolinone (Ala-Gly) cross-link spans 147 to 149 (ASG). Serine 148 bears the 2,3-didehydroalanine (Ser) mark.

Belongs to the PAL/histidase family. Contains an active site 4-methylidene-imidazol-5-one (MIO), which is formed autocatalytically by cyclization and dehydration of residues Ala-Ser-Gly.

The protein localises to the cytoplasm. It catalyses the reaction L-histidine = trans-urocanate + NH4(+). It functions in the pathway amino-acid degradation; L-histidine degradation into L-glutamate; N-formimidoyl-L-glutamate from L-histidine: step 1/3. This Gloeobacter violaceus (strain ATCC 29082 / PCC 7421) protein is Histidine ammonia-lyase.